A 484-amino-acid chain; its full sequence is ATP-dependent RNA helicase DDX25 (484 aa).

Residue threonine 49 is modified to Phosphothreonine. Residues 62–75 carry the Nuclear export signal motif; the sequence is LAANSLLNKLIRQS. The short motif at 98–126 is the Q motif element; the sequence is KTFEELRLKEELLKGIYAMGFNRPSKIQE. The Nuclear localization signal motif lies at 101-115; that stretch reads EELRLKEELLKGIYA. The region spanning 131-301 is the Helicase ATP-binding domain; it reads MMLAHPPQNL…ERIIPDPNVI (171 aa). Position 144–151 (144–151) interacts with ATP; sequence SQSGTGKT. The short motif at 248–251 is the DEAD box element; it reads DEAD. Residues 312 to 479 form the Helicase C-terminal domain; the sequence is NIRQYYVLCE…QLDPEDMDEI (168 aa).

This sequence belongs to the DEAD box helicase family. Post-translationally, phosphorylated on threonine residues. The phosphorylated form is found in the cytoplasm but not in the nucleus. In terms of tissue distribution, isoform 1 is expressed in germ cells. Isoform 2 is expressed in Leydig cells and in round spermatids of adult testis upon gonadotropin stimulation.

The protein localises to the cytoplasm. Its subcellular location is the nucleus. The enzyme catalyses ATP + H2O = ADP + phosphate + H(+). ATP-dependent RNA helicase. Required for mRNA export and translation regulation during spermatid development. This is ATP-dependent RNA helicase DDX25 (Ddx25) from Mus musculus (Mouse).